The following is a 234-amino-acid chain: Endonuclease NucS (234 aa).

Belongs to the NucS endonuclease family.

The protein resides in the cytoplasm. Functionally, cleaves both 3' and 5' ssDNA extremities of branched DNA structures. The polypeptide is Endonuclease NucS (Bifidobacterium adolescentis (strain ATCC 15703 / DSM 20083 / NCTC 11814 / E194a)).